The primary structure comprises 164 residues: uncharacterized protein (164 aa).

Residues 1 to 77 (MGQKKTMGTE…PCSIRDAPFH (77 aa)) form a disordered region.

This is an uncharacterized protein from Homo sapiens (Human).